Consider the following 492-residue polypeptide: Aspartyl/glutamyl-tRNA(Asn/Gln) amidotransferase subunit B (492 aa).

This sequence belongs to the GatB/GatE family. GatB subfamily. In terms of assembly, heterotrimer of A, B and C subunits.

The catalysed reaction is L-glutamyl-tRNA(Gln) + L-glutamine + ATP + H2O = L-glutaminyl-tRNA(Gln) + L-glutamate + ADP + phosphate + H(+). The enzyme catalyses L-aspartyl-tRNA(Asn) + L-glutamine + ATP + H2O = L-asparaginyl-tRNA(Asn) + L-glutamate + ADP + phosphate + 2 H(+). Allows the formation of correctly charged Asn-tRNA(Asn) or Gln-tRNA(Gln) through the transamidation of misacylated Asp-tRNA(Asn) or Glu-tRNA(Gln) in organisms which lack either or both of asparaginyl-tRNA or glutaminyl-tRNA synthetases. The reaction takes place in the presence of glutamine and ATP through an activated phospho-Asp-tRNA(Asn) or phospho-Glu-tRNA(Gln). The sequence is that of Aspartyl/glutamyl-tRNA(Asn/Gln) amidotransferase subunit B from Bradyrhizobium diazoefficiens (strain JCM 10833 / BCRC 13528 / IAM 13628 / NBRC 14792 / USDA 110).